The following is a 150-amino-acid chain: MIP18 family protein FAM96A (150 aa).

Belongs to the MIP18 family.

Its function is as follows. May play a role in chromosome segregation through establishment of sister chromatid cohesion. The chain is MIP18 family protein FAM96A (fam96A) from Dictyostelium discoideum (Social amoeba).